The sequence spans 632 residues: 1-deoxy-D-xylulose-5-phosphate synthase (632 aa).

Residues His79 and 120–122 contribute to the thiamine diphosphate site; that span reads GHA. Asp151 contacts Mg(2+). Thiamine diphosphate-binding positions include 152–153, Asn180, Phe292, and Glu376; that span reads GS. Asn180 provides a ligand contact to Mg(2+).

The protein belongs to the transketolase family. DXPS subfamily. Homodimer. Requires Mg(2+) as cofactor. The cofactor is thiamine diphosphate.

The catalysed reaction is D-glyceraldehyde 3-phosphate + pyruvate + H(+) = 1-deoxy-D-xylulose 5-phosphate + CO2. It participates in metabolic intermediate biosynthesis; 1-deoxy-D-xylulose 5-phosphate biosynthesis; 1-deoxy-D-xylulose 5-phosphate from D-glyceraldehyde 3-phosphate and pyruvate: step 1/1. Functionally, catalyzes the acyloin condensation reaction between C atoms 2 and 3 of pyruvate and glyceraldehyde 3-phosphate to yield 1-deoxy-D-xylulose-5-phosphate (DXP). This is 1-deoxy-D-xylulose-5-phosphate synthase from Azobacteroides pseudotrichonymphae genomovar. CFP2.